A 283-amino-acid chain; its full sequence is Cyclin-C (283 aa).

The region spanning 46 to 144 (NVIQALGEHL…ILECEFYLLE (99 aa)) is the Cyclin N-terminal domain. The interval 252 to 283 (SILSKMPKPKPPPNSDGEQGTNGSQSSGYSQS) is disordered. A compositionally biased stretch (polar residues) spans 267-283 (DGEQGTNGSQSSGYSQS).

Belongs to the cyclin family. Cyclin C subfamily. Component of the Mediator complex. The cylin/CDK pair formed by ccnc/cdk8 also associates with the large subunit of RNA polymerase II.

It localises to the nucleus. Component of the Mediator complex, a coactivator involved in regulated gene transcription of nearly all RNA polymerase II-dependent genes. Mediator functions as a bridge to convey information from gene-specific regulatory proteins to the basal RNA polymerase II transcription machinery. Mediator is recruited to promoters by direct interactions with regulatory proteins and serves as a scaffold for the assembly of a functional preinitiation complex with RNA polymerase II and the general transcription factors. Binds to and activates cyclin-dependent kinase cdk8 that phosphorylates the CTD (C-terminal domain) of the large subunit of RNA polymerase II (RNAp II), which may inhibit the formation of a transcription initiation complex. This Xenopus laevis (African clawed frog) protein is Cyclin-C (ccnc).